We begin with the raw amino-acid sequence, 78 residues long: Large ribosomal subunit protein bL28 (78 aa).

The protein belongs to the bacterial ribosomal protein bL28 family.

This chain is Large ribosomal subunit protein bL28, found in Colwellia psychrerythraea (strain 34H / ATCC BAA-681) (Vibrio psychroerythus).